Here is a 396-residue protein sequence, read N- to C-terminus: Putative carbamoyltransferase YgeW (396 aa).

Carbamoyl phosphate contacts are provided by residues 71–74 (STRT), Gln98, 165–168 (HPTQ), and 330–331 (CL).

This sequence belongs to the aspartate/ornithine carbamoyltransferase superfamily. Homotrimer.

This is Putative carbamoyltransferase YgeW (ygeW) from Escherichia coli O6:H1 (strain CFT073 / ATCC 700928 / UPEC).